The chain runs to 56 residues: Large ribosomal subunit protein bL33 (56 aa).

Belongs to the bacterial ribosomal protein bL33 family.

This Vibrio vulnificus (strain YJ016) protein is Large ribosomal subunit protein bL33.